Here is a 142-residue protein sequence, read N- to C-terminus: Peptide methionine sulfoxide reductase MsrB (142 aa).

A MsrB domain is found at 2–125 (LKKDKSELTD…NSAAIQFIPY (124 aa)). Cys-114 serves as the catalytic Nucleophile.

Belongs to the MsrB Met sulfoxide reductase family.

It carries out the reaction L-methionyl-[protein] + [thioredoxin]-disulfide + H2O = L-methionyl-(R)-S-oxide-[protein] + [thioredoxin]-dithiol. The sequence is that of Peptide methionine sulfoxide reductase MsrB from Staphylococcus aureus (strain Mu3 / ATCC 700698).